The primary structure comprises 288 residues: Bis(5'-nucleosyl)-tetraphosphatase, symmetrical (288 aa).

The protein belongs to the Ap4A hydrolase family.

It carries out the reaction P(1),P(4)-bis(5'-adenosyl) tetraphosphate + H2O = 2 ADP + 2 H(+). In terms of biological role, hydrolyzes diadenosine 5',5'''-P1,P4-tetraphosphate to yield ADP. The chain is Bis(5'-nucleosyl)-tetraphosphatase, symmetrical from Pseudomonas putida (strain ATCC 700007 / DSM 6899 / JCM 31910 / BCRC 17059 / LMG 24140 / F1).